Reading from the N-terminus, the 226-residue chain is ATP synthase F(0) complex subunit a (226 aa).

Transmembrane regions (helical) follow at residues 11-31 (APSM…SILF), 68-88 (WALM…LGLL), 97-117 (QLSM…ITGF), 138-158 (IPML…ALAV), 164-184 (ITAG…LINI), and 189-209 (AFIT…VALI).

It belongs to the ATPase A chain family. Component of the ATP synthase complex composed at least of ATP5F1A/subunit alpha, ATP5F1B/subunit beta, ATP5MC1/subunit c (homooctomer), MT-ATP6/subunit a, MT-ATP8/subunit 8, ATP5ME/subunit e, ATP5MF/subunit f, ATP5MG/subunit g, ATP5MK/subunit k, ATP5MJ/subunit j, ATP5F1C/subunit gamma, ATP5F1D/subunit delta, ATP5F1E/subunit epsilon, ATP5PF/subunit F6, ATP5PB/subunit b, ATP5PD/subunit d, ATP5PO/subunit OSCP. ATP synthase complex consists of a soluble F(1) head domain (subunits alpha(3) and beta(3)) - the catalytic core - and a membrane F(0) domain - the membrane proton channel (subunits c, a, 8, e, f, g, k and j). These two domains are linked by a central stalk (subunits gamma, delta, and epsilon) rotating inside the F1 region and a stationary peripheral stalk (subunits F6, b, d, and OSCP). Interacts with DNAJC30; interaction is direct.

It localises to the mitochondrion inner membrane. The catalysed reaction is H(+)(in) = H(+)(out). Its function is as follows. Subunit a, of the mitochondrial membrane ATP synthase complex (F(1)F(0) ATP synthase or Complex V) that produces ATP from ADP in the presence of a proton gradient across the membrane which is generated by electron transport complexes of the respiratory chain. ATP synthase complex consist of a soluble F(1) head domain - the catalytic core - and a membrane F(1) domain - the membrane proton channel. These two domains are linked by a central stalk rotating inside the F(1) region and a stationary peripheral stalk. During catalysis, ATP synthesis in the catalytic domain of F(1) is coupled via a rotary mechanism of the central stalk subunits to proton translocation. With the subunit c (ATP5MC1), forms the proton-conducting channel in the F(0) domain, that contains two crucial half-channels (inlet and outlet) that facilitate proton movement from the mitochondrial intermembrane space (IMS) into the matrix. Protons are taken up via the inlet half-channel and released through the outlet half-channel, following a Grotthuss mechanism. This Canis lupus familiaris (Dog) protein is ATP synthase F(0) complex subunit a.